Here is a 213-residue protein sequence, read N- to C-terminus: MRNNNVPIAVEGLPFVAGAALISAIFIIIGWKVGAAFFIVVTVFIIFFFRNPKRVTPANEKAVVSPADGVVIYLGPAREPHLDQDMMKISIFMSVFNVHINRVPISARVVDQFYRPGKFLDVRHESATFENEQKGLVLETANGIRLVVVQVAGLIARRIVCYPTIGTMLRRGERYGLIRFGSRLDVYLPLDTELQVTMGDQTVAGETILGVTT.

S182 acts as the Schiff-base intermediate with substrate; via pyruvic acid in catalysis. A Pyruvic acid (Ser); by autocatalysis modification is found at S182.

This sequence belongs to the phosphatidylserine decarboxylase family. PSD-A subfamily. In terms of assembly, heterodimer of a large membrane-associated beta subunit and a small pyruvoyl-containing alpha subunit. Pyruvate serves as cofactor. Post-translationally, is synthesized initially as an inactive proenzyme. Formation of the active enzyme involves a self-maturation process in which the active site pyruvoyl group is generated from an internal serine residue via an autocatalytic post-translational modification. Two non-identical subunits are generated from the proenzyme in this reaction, and the pyruvate is formed at the N-terminus of the alpha chain, which is derived from the carboxyl end of the proenzyme. The post-translation cleavage follows an unusual pathway, termed non-hydrolytic serinolysis, in which the side chain hydroxyl group of the serine supplies its oxygen atom to form the C-terminus of the beta chain, while the remainder of the serine residue undergoes an oxidative deamination to produce ammonia and the pyruvoyl prosthetic group on the alpha chain.

It is found in the cell membrane. The enzyme catalyses a 1,2-diacyl-sn-glycero-3-phospho-L-serine + H(+) = a 1,2-diacyl-sn-glycero-3-phosphoethanolamine + CO2. The protein operates within phospholipid metabolism; phosphatidylethanolamine biosynthesis; phosphatidylethanolamine from CDP-diacylglycerol: step 2/2. Catalyzes the formation of phosphatidylethanolamine (PtdEtn) from phosphatidylserine (PtdSer). This Geotalea daltonii (strain DSM 22248 / JCM 15807 / FRC-32) (Geobacter daltonii) protein is Phosphatidylserine decarboxylase proenzyme.